Consider the following 502-residue polypeptide: NAD(P)H-quinone oxidoreductase subunit 2, chloroplastic (502 aa).

The next 14 membrane-spanning stretches (helical) occupy residues 15–35 (VLPEAIIICSSLFILIIDLIF), 42–62 (VLPYMAILGLILSMLSLLFQW), 79–99 (LSIAFRLLIALSSMLCVLLSI), 108–128 (TLSEFLVIFLTATLGAMLLCG), 132–152 (ILMIFLSLETLGLCSYILTGY), 167–187 (LLIGAASSSILLYGFSLLYGL), 210–230 (LASLVALALIIVGISFKIAAA), 253–275 (VSSKAAGLMLATRIMTILFPYII), 278–298 (WHNIFQILAILSMAIGNIIAI), 307–327 (LGYSSIAQAGFLLVGLLAGNI), 334–354 (LVYMLIYLFMNLGAFACVILF), 375–395 (ILALCLSICLLSLGGIPPFGG), 413–433 (LLVFVGLLTSVISIFYYIKII), and 468–488 (ILICVIGTTISGIFVNPIISI).

The protein belongs to the complex I subunit 2 family. In terms of assembly, NDH is composed of at least 16 different subunits, 5 of which are encoded in the nucleus.

Its subcellular location is the plastid. The protein localises to the chloroplast thylakoid membrane. It carries out the reaction a plastoquinone + NADH + (n+1) H(+)(in) = a plastoquinol + NAD(+) + n H(+)(out). The catalysed reaction is a plastoquinone + NADPH + (n+1) H(+)(in) = a plastoquinol + NADP(+) + n H(+)(out). In terms of biological role, NDH shuttles electrons from NAD(P)H:plastoquinone, via FMN and iron-sulfur (Fe-S) centers, to quinones in the photosynthetic chain and possibly in a chloroplast respiratory chain. The immediate electron acceptor for the enzyme in this species is believed to be plastoquinone. Couples the redox reaction to proton translocation, and thus conserves the redox energy in a proton gradient. This Mesostigma viride (Green alga) protein is NAD(P)H-quinone oxidoreductase subunit 2, chloroplastic.